We begin with the raw amino-acid sequence, 554 residues long: Glucose-6-phosphate isomerase (554 aa).

Glu359 functions as the Proton donor in the catalytic mechanism. Catalysis depends on residues His390 and Lys518.

It belongs to the GPI family.

Its subcellular location is the cytoplasm. It catalyses the reaction alpha-D-glucose 6-phosphate = beta-D-fructose 6-phosphate. It functions in the pathway carbohydrate biosynthesis; gluconeogenesis. Its pathway is carbohydrate degradation; glycolysis; D-glyceraldehyde 3-phosphate and glycerone phosphate from D-glucose: step 2/4. In terms of biological role, catalyzes the reversible isomerization of glucose-6-phosphate to fructose-6-phosphate. The polypeptide is Glucose-6-phosphate isomerase (Pseudomonas putida (strain W619)).